A 174-amino-acid chain; its full sequence is Endoribonuclease YbeY (174 aa).

3 residues coordinate Zn(2+): H129, H133, and H139.

This sequence belongs to the endoribonuclease YbeY family. The cofactor is Zn(2+).

It localises to the cytoplasm. Single strand-specific metallo-endoribonuclease involved in late-stage 70S ribosome quality control and in maturation of the 3' terminus of the 16S rRNA. This Lactobacillus helveticus (strain DPC 4571) protein is Endoribonuclease YbeY.